A 277-amino-acid polypeptide reads, in one-letter code: Putative phosphoenolpyruvate synthase regulatory protein (277 aa).

157-164 is an ADP binding site; sequence GVSRCGKT.

Belongs to the pyruvate, phosphate/water dikinase regulatory protein family. PSRP subfamily.

The catalysed reaction is [pyruvate, water dikinase] + ADP = [pyruvate, water dikinase]-phosphate + AMP + H(+). The enzyme catalyses [pyruvate, water dikinase]-phosphate + phosphate + H(+) = [pyruvate, water dikinase] + diphosphate. Its function is as follows. Bifunctional serine/threonine kinase and phosphorylase involved in the regulation of the phosphoenolpyruvate synthase (PEPS) by catalyzing its phosphorylation/dephosphorylation. This Photobacterium profundum (strain SS9) protein is Putative phosphoenolpyruvate synthase regulatory protein.